The sequence spans 174 residues: Granulocyte colony-stimulating factor (174 aa).

Cystine bridges form between C36/C42 and C64/C74. T133 is a glycosylation site (O-linked (GalNAc...) threonine).

Belongs to the IL-6 superfamily. Monomer. O-glycosylated.

It localises to the secreted. In terms of biological role, granulocyte/macrophage colony-stimulating factors are cytokines that act in hematopoiesis by controlling the production, differentiation, and function of 2 related white cell populations of the blood, the granulocytes and the monocytes-macrophages. This CSF induces granulocytes. The protein is Granulocyte colony-stimulating factor (CSF3) of Ovis aries (Sheep).